The chain runs to 108 residues: Histone H4 (108 aa).

The tract at residues 1-36 (MSSAQSRGGKTGGKVGGKVGAKRHKKTQKEHINGIT) is disordered. The span at 9–19 (GKTGGKVGGKV) shows a compositional bias: gly residues.

It belongs to the histone H4 family. The nucleosome is a histone octamer containing two molecules each of H2A, H2B, H3 and H4 assembled in one H3-H4 heterotetramer and two H2A-H2B heterodimers. The octamer wraps approximately 147 bp of DNA.

Its subcellular location is the nucleus. It is found in the chromosome. Its function is as follows. Core component of nucleosome. Nucleosomes wrap and compact DNA into chromatin, limiting DNA accessibility to the cellular machineries which require DNA as a template. Histones thereby play a central role in transcription regulation, DNA repair, DNA replication and chromosomal stability. DNA accessibility is regulated via a complex set of post-translational modifications of histones, also called histone code, and nucleosome remodeling. The polypeptide is Histone H4 (H4a) (Dictyostelium discoideum (Social amoeba)).